A 422-amino-acid polypeptide reads, in one-letter code: UDP-N-acetylmuramoylalanine--D-glutamate ligase (422 aa).

102 to 108 (GTNGKTT) is a binding site for ATP.

Belongs to the MurCDEF family.

Its subcellular location is the cytoplasm. The catalysed reaction is UDP-N-acetyl-alpha-D-muramoyl-L-alanine + D-glutamate + ATP = UDP-N-acetyl-alpha-D-muramoyl-L-alanyl-D-glutamate + ADP + phosphate + H(+). The protein operates within cell wall biogenesis; peptidoglycan biosynthesis. In terms of biological role, cell wall formation. Catalyzes the addition of glutamate to the nucleotide precursor UDP-N-acetylmuramoyl-L-alanine (UMA). In Helicobacter pylori (strain ATCC 700392 / 26695) (Campylobacter pylori), this protein is UDP-N-acetylmuramoylalanine--D-glutamate ligase.